The following is a 602-amino-acid chain: Pentatricopeptide repeat-containing protein At3g04760, chloroplastic (602 aa).

Residues 1–78 (MTPLSSELVG…TDATLPTERR (78 aa)) constitute a chloroplast transit peptide. The segment covering 42–64 (FSNSNPNNDNGRSFSSSGARNLQ) has biased composition (polar residues). The disordered stretch occupies residues 42 to 85 (FSNSNPNNDNGRSFSSSGARNLQTTTTTDATLPTERRQQHSQSL). Residues 65 to 74 (TTTTTDATLP) show a composition bias toward low complexity. PPR repeat units lie at residues 88–122 (RDTQ…GYNP), 123–153 (DVIL…LEKF), 157–191 (DVFA…DFSP), 192–226 (DTVT…NCQP), 227–261 (TVIT…GLKP), 262–296 (DMFT…GCEP), 297–331 (DVIS…KCDP), 332–366 (NVVT…GLTP), 367–401 (DAYS…GCLP), 402–436 (DIVN…GCSP), 437–471 (NSSS…GIDP), 472–506 (DEIT…EFHP), 507–541 (SVVT…GCRP), and 542–576 (NETT…DAIS).

It belongs to the PPR family. P subfamily.

It is found in the plastid. Its subcellular location is the chloroplast. This chain is Pentatricopeptide repeat-containing protein At3g04760, chloroplastic, found in Arabidopsis thaliana (Mouse-ear cress).